Consider the following 315-residue polypeptide: HPr kinase/phosphorylase (315 aa).

Residues histidine 140 and lysine 161 contribute to the active site. 155 to 162 (GDSGVGKS) lines the ATP pocket. Serine 162 contacts Mg(2+). Catalysis depends on aspartate 179, which acts as the Proton acceptor; for phosphorylation activity. Proton donor; for dephosphorylation activity. Residues 203–212 (LEIRGIGIID) form an important for the catalytic mechanism of both phosphorylation and dephosphorylation region. A Mg(2+)-binding site is contributed by glutamate 204. Arginine 245 is an active-site residue. The tract at residues 266–271 (PVKTGR) is important for the catalytic mechanism of dephosphorylation.

This sequence belongs to the HPrK/P family. Homohexamer. It depends on Mg(2+) as a cofactor.

The catalysed reaction is [HPr protein]-L-serine + ATP = [HPr protein]-O-phospho-L-serine + ADP + H(+). It carries out the reaction [HPr protein]-O-phospho-L-serine + phosphate + H(+) = [HPr protein]-L-serine + diphosphate. Its function is as follows. Catalyzes the ATP- as well as the pyrophosphate-dependent phosphorylation of a specific serine residue in HPr, a phosphocarrier protein of the phosphoenolpyruvate-dependent sugar phosphotransferase system (PTS). HprK/P also catalyzes the pyrophosphate-producing, inorganic phosphate-dependent dephosphorylation (phosphorolysis) of seryl-phosphorylated HPr (P-Ser-HPr). The two antagonistic activities of HprK/P are regulated by several intracellular metabolites, which change their concentration in response to the absence or presence of rapidly metabolisable carbon sources (glucose, fructose, etc.) in the growth medium. Therefore, by controlling the phosphorylation state of HPr, HPrK/P is a sensor enzyme that plays a major role in the regulation of carbon metabolism and sugar transport: it mediates carbon catabolite repression (CCR), and regulates PTS-catalyzed carbohydrate uptake and inducer exclusion. The sequence is that of HPr kinase/phosphorylase from Lactiplantibacillus plantarum (strain ATCC BAA-793 / NCIMB 8826 / WCFS1) (Lactobacillus plantarum).